A 329-amino-acid polypeptide reads, in one-letter code: Sex comb on midleg-like protein 1 (329 aa).

Ser-138 and Ser-238 each carry phosphoserine. The interval 138–157 (SPTLPVSRRENNSPSNLPRP) is disordered. In terms of domain architecture, SAM spans 258 to 325 (WSVEAVVLFL…YYIDRLKQGK (68 aa)).

Belongs to the SCM family.

Its subcellular location is the nucleus. In terms of biological role, putative Polycomb group (PcG) protein. PcG proteins act by forming multiprotein complexes, which are required to maintain the transcriptionally repressive state of homeotic genes throughout development. May be involved in spermatogenesis during sexual maturation. This Pan troglodytes (Chimpanzee) protein is Sex comb on midleg-like protein 1 (SCML1).